Consider the following 284-residue polypeptide: TnP I resolvase (284 aa).

Positions 1–84 (MDVAKQFSSY…SLAKFNEFLI (84 aa)) constitute a Core-binding (CB) domain. In terms of domain architecture, Tyr recombinase spans 107 to 282 (ASPTQIVELD…NQLQLKNKME (176 aa)). Active-site residues include arginine 145, lysine 170, histidine 234, arginine 237, and histidine 260. Catalysis depends on tyrosine 269, which acts as the O-(3'-phospho-DNA)-tyrosine intermediate.

It belongs to the 'phage' integrase family.

In terms of biological role, resolvase catalyzes the resolution (a site-specific recombination) of the cointegrated replicon to yield the final transposition products. The sequence is that of TnP I resolvase (tnpI) from Bacillus thuringiensis.